The chain runs to 299 residues: Small ribosomal subunit biogenesis GTPase RsgA (299 aa).

Positions 64-225 (KNEMIRPPVA…VGDTPGFSSL (162 aa)) constitute a CP-type G domain. GTP is bound by residues 113-116 (TKTD) and 168-176 (GQTGAGKST). Residues C249, C254, H256, and C262 each contribute to the Zn(2+) site.

Belongs to the TRAFAC class YlqF/YawG GTPase family. RsgA subfamily. Monomer. Associates with 30S ribosomal subunit, binds 16S rRNA. Zn(2+) is required as a cofactor.

The protein localises to the cytoplasm. Its function is as follows. One of several proteins that assist in the late maturation steps of the functional core of the 30S ribosomal subunit. Helps release RbfA from mature subunits. May play a role in the assembly of ribosomal proteins into the subunit. Circularly permuted GTPase that catalyzes slow GTP hydrolysis, GTPase activity is stimulated by the 30S ribosomal subunit. The protein is Small ribosomal subunit biogenesis GTPase RsgA of Latilactobacillus sakei subsp. sakei (strain 23K) (Lactobacillus sakei subsp. sakei).